We begin with the raw amino-acid sequence, 203 residues long: Urease accessory protein UreG (203 aa).

14-21 (GPVGSGKT) lines the GTP pocket.

This sequence belongs to the SIMIBI class G3E GTPase family. UreG subfamily. As to quaternary structure, homodimer. UreD, UreF and UreG form a complex that acts as a GTP-hydrolysis-dependent molecular chaperone, activating the urease apoprotein by helping to assemble the nickel containing metallocenter of UreC. The UreE protein probably delivers the nickel.

The protein resides in the cytoplasm. Facilitates the functional incorporation of the urease nickel metallocenter. This process requires GTP hydrolysis, probably effectuated by UreG. This Sinorhizobium medicae (strain WSM419) (Ensifer medicae) protein is Urease accessory protein UreG.